A 302-amino-acid chain; its full sequence is MARRALDGVLLLDKPVGLSSNDALMRAKRLYQAKKAGHTGTLDPLASGLLPLCFGEATKFSQDLLEADKTYEATMRLGVRTTTGDAEGDVLDTRDVSCDEAAVRAALARFVGEIVQVPPMYSALKRDGKPLYEYARAGQTVEREGRTVTIRALALVSCALPDVTFRVTCSKGTYVRTLAEDIGEALGCGAHLTMLRRTGVGPLTLEHAVTLDALDAATQDERDARLAPVDALLSTFPCVKLDAALATRFLHGQRLKLSELAARPDAAEGGRVRVYDADDRLLGVARASEGVLAPERLVVTGA.

D43 functions as the Nucleophile in the catalytic mechanism.

This sequence belongs to the pseudouridine synthase TruB family. Type 1 subfamily.

It catalyses the reaction uridine(55) in tRNA = pseudouridine(55) in tRNA. Functionally, responsible for synthesis of pseudouridine from uracil-55 in the psi GC loop of transfer RNAs. The chain is tRNA pseudouridine synthase B from Burkholderia mallei (strain NCTC 10247).